Consider the following 415-residue polypeptide: Glutamyl-tRNA reductase (415 aa).

Substrate contacts are provided by residues 49-52 (TCNR), serine 104, 109-111 (EPQ), and glutamine 115. Cysteine 50 serves as the catalytic Nucleophile. 184 to 189 (GAGEMI) serves as a coordination point for NADP(+).

It belongs to the glutamyl-tRNA reductase family. As to quaternary structure, homodimer.

It carries out the reaction (S)-4-amino-5-oxopentanoate + tRNA(Glu) + NADP(+) = L-glutamyl-tRNA(Glu) + NADPH + H(+). It functions in the pathway porphyrin-containing compound metabolism; protoporphyrin-IX biosynthesis; 5-aminolevulinate from L-glutamyl-tRNA(Glu): step 1/2. Functionally, catalyzes the NADPH-dependent reduction of glutamyl-tRNA(Glu) to glutamate 1-semialdehyde (GSA). This Neisseria meningitidis serogroup B (strain ATCC BAA-335 / MC58) protein is Glutamyl-tRNA reductase.